A 637-amino-acid polypeptide reads, in one-letter code: MNKQTILRIAKYISICFLTVFIAAIMLGGGLFLYYVSNAPALSESKLVATTSSKIYDNNDELIADLGSERRVNAQANEIPTDLVNAIVSIEDHRFFNHRGIDTIRILGATLRNLRGGGGLQGASTLTQQLIKLTYFSTSTSDQTLSRKAQEAWLAVQLEQKATKQEILTYYINKVYMSNGNYGMQTAAQSYYGKDLKDLSIPQLALLAGMPQAPNQYDPYSHPEAAQERRNLVLSEMKGQGYITAEQYEKAINTPITDGLQSLKSANSYPPYMDNYLKEVIDQVEQETGYNLLTTGMEVYTNVDSKVQQRLWDIYNTDEYVNYPDDELQVASTIVDVTDGKVIAQLGARHQSSNVSFGINQAVETNRDWGSTMKPITDYAPALEYGVYDSTASIVHDSPYNYPGTSTPVYNWDKSYFGNITLQYALQQSRNVPAVETLEKVGLDRAKTFLNGLGIDYPSIHYANAISSNTTESDKKYGASSEKMAAAYAAFANGGIYPKPMYINKIVFSDGSSKEFSDSGTRAMKETTAYMMTDMMKTVLAYGTGRGAYLPWLPQAGKTGTSNYTDDEIENYIKNTGYVAPDEMFVGYTRKYSMAVWTGYSNRLTPIVGDGFYVAAKVYRSMMTYLSEDDHPGDWTM.

The segment at 62-224 (LIADLGSERR…NQYDPYSHPE (163 aa)) is transglycosylase. Glutamate 91 serves as the catalytic Proton donor; for transglycosylase activity. A transpeptidase region spans residues 298–612 (EVYTNVDSKV…RLTPIVGDGF (315 aa)). The active-site Acyl-ester intermediate; for transpeptidase activity is the serine 371.

The protein in the N-terminal section; belongs to the glycosyltransferase 51 family. In the C-terminal section; belongs to the transpeptidase family.

The protein localises to the secreted. It catalyses the reaction [GlcNAc-(1-&gt;4)-Mur2Ac(oyl-L-Ala-gamma-D-Glu-L-Lys-D-Ala-D-Ala)](n)-di-trans,octa-cis-undecaprenyl diphosphate + beta-D-GlcNAc-(1-&gt;4)-Mur2Ac(oyl-L-Ala-gamma-D-Glu-L-Lys-D-Ala-D-Ala)-di-trans,octa-cis-undecaprenyl diphosphate = [GlcNAc-(1-&gt;4)-Mur2Ac(oyl-L-Ala-gamma-D-Glu-L-Lys-D-Ala-D-Ala)](n+1)-di-trans,octa-cis-undecaprenyl diphosphate + di-trans,octa-cis-undecaprenyl diphosphate + H(+). The enzyme catalyses Preferential cleavage: (Ac)2-L-Lys-D-Ala-|-D-Ala. Also transpeptidation of peptidyl-alanyl moieties that are N-acyl substituents of D-alanine.. It participates in cell wall biogenesis; peptidoglycan biosynthesis. Functionally, cell wall formation. The protein is Penicillin-binding protein 1A (ponA) of Streptococcus oralis.